The chain runs to 189 residues: Glycerol-3-phosphate acyltransferase (189 aa).

Transmembrane regions (helical) follow at residues 1-21 (MVWLLAILAYLLGSLSFAILL), 79-99 (QQAWIGLAAVSGHLYPLYFNF), 113-133 (LGLYPPAVLPAVAAWLLVFAF), and 151-171 (LLAWRQPEALLPMLLLYGVIV).

It belongs to the PlsY family. As to quaternary structure, probably interacts with PlsX.

Its subcellular location is the cell inner membrane. The enzyme catalyses an acyl phosphate + sn-glycerol 3-phosphate = a 1-acyl-sn-glycero-3-phosphate + phosphate. Its pathway is lipid metabolism; phospholipid metabolism. Catalyzes the transfer of an acyl group from acyl-phosphate (acyl-PO(4)) to glycerol-3-phosphate (G3P) to form lysophosphatidic acid (LPA). This enzyme utilizes acyl-phosphate as fatty acyl donor, but not acyl-CoA or acyl-ACP. In Azotobacter vinelandii (strain DJ / ATCC BAA-1303), this protein is Glycerol-3-phosphate acyltransferase.